Consider the following 97-residue polypeptide: M-zodatoxin-Lt7a (97 aa).

The N-terminal stretch at Met1–Ser22 is a signal peptide. Positions Val23–Arg63 are excised as a propeptide. Positions Glu60–Arg63 match the Processing quadruplet motif motif.

Cleavage of the propeptide depends on the processing quadruplet motif (XXXR, with at least one of X being E). In terms of tissue distribution, expressed by the venom gland.

The protein resides in the secreted. Its function is as follows. Does not have antimicrobial or antifungal activity. Does not have hemolytic activity against rabbit erythrocytes. However, it causes some conductance changes in planar bilayer membranes, without membrane rupture, suggesting a cytolytic function on other biological targets. It causes paralysis, but is not lethal when injected into insect (M.domestica) larvae. The polypeptide is M-zodatoxin-Lt7a (Lachesana tarabaevi (Spider)).